Reading from the N-terminus, the 284-residue chain is ATP phosphoribosyltransferase (284 aa).

The protein belongs to the ATP phosphoribosyltransferase family. Long subfamily. Mg(2+) serves as cofactor.

Its subcellular location is the cytoplasm. It carries out the reaction 1-(5-phospho-beta-D-ribosyl)-ATP + diphosphate = 5-phospho-alpha-D-ribose 1-diphosphate + ATP. The protein operates within amino-acid biosynthesis; L-histidine biosynthesis; L-histidine from 5-phospho-alpha-D-ribose 1-diphosphate: step 1/9. With respect to regulation, feedback inhibited by histidine. Its function is as follows. Catalyzes the condensation of ATP and 5-phosphoribose 1-diphosphate to form N'-(5'-phosphoribosyl)-ATP (PR-ATP). Has a crucial role in the pathway because the rate of histidine biosynthesis seems to be controlled primarily by regulation of HisG enzymatic activity. The protein is ATP phosphoribosyltransferase of Pseudarthrobacter chlorophenolicus (strain ATCC 700700 / DSM 12829 / CIP 107037 / JCM 12360 / KCTC 9906 / NCIMB 13794 / A6) (Arthrobacter chlorophenolicus).